A 496-amino-acid chain; its full sequence is Lysine--tRNA ligase (496 aa).

Mg(2+) contacts are provided by Glu-409 and Glu-416.

The protein belongs to the class-II aminoacyl-tRNA synthetase family. In terms of assembly, homodimer. Mg(2+) is required as a cofactor.

The protein localises to the cytoplasm. The enzyme catalyses tRNA(Lys) + L-lysine + ATP = L-lysyl-tRNA(Lys) + AMP + diphosphate. The sequence is that of Lysine--tRNA ligase from Streptococcus thermophilus (strain ATCC BAA-491 / LMD-9).